A 385-amino-acid chain; its full sequence is Chaperone protein DnaJ (385 aa).

The J domain occupies 5-70 (DYYEVLGVAK…QKRAAYDRYG (66 aa)). The CR-type zinc-finger motif lies at 145 to 223 (GFDTEIRVPS…CDGVGRTRRN (79 aa)). Cys-158, Cys-161, Cys-175, Cys-178, Cys-197, Cys-200, Cys-211, and Cys-214 together coordinate Zn(2+). CXXCXGXG motif repeat units lie at residues 158–165 (CDTCHGSG), 175–182 (CRTCGGSG), 197–204 (CPTCHGTG), and 211–218 (CPSCDGVG).

It belongs to the DnaJ family. As to quaternary structure, homodimer. The cofactor is Zn(2+).

It localises to the cytoplasm. In terms of biological role, participates actively in the response to hyperosmotic and heat shock by preventing the aggregation of stress-denatured proteins and by disaggregating proteins, also in an autonomous, DnaK-independent fashion. Unfolded proteins bind initially to DnaJ; upon interaction with the DnaJ-bound protein, DnaK hydrolyzes its bound ATP, resulting in the formation of a stable complex. GrpE releases ADP from DnaK; ATP binding to DnaK triggers the release of the substrate protein, thus completing the reaction cycle. Several rounds of ATP-dependent interactions between DnaJ, DnaK and GrpE are required for fully efficient folding. Also involved, together with DnaK and GrpE, in the DNA replication of plasmids through activation of initiation proteins. This Bordetella pertussis (strain Tohama I / ATCC BAA-589 / NCTC 13251) protein is Chaperone protein DnaJ.